A 305-amino-acid polypeptide reads, in one-letter code: MANGEIISGFIAPHPPHLVYGENPPQNEPKSTGGWEQLRWAYERARASIEELKPDVLLVHSPHWITSVGHHFIGVDHLQGRSVDPIFPNLFRFDYSINFDVELSEACCEEGRKAGLVTKMMRNPRFRPDYGTITTLHMIRPQWDIPVVSISANNTPYYLSMEEGLGEMDVLGKATREAILKSGKRAVLLASNTLSHWHFHEEPVPPEDMSKEHPQTKIGYEWDMRMIELMRQGRMEEVFQLLPQFIEEAFAEVKSGAFTWMHAAMQYPNLPAELHGYGTVIGTGNAVVEWNLVKAGLARVAGKAA.

The Fe cation site is built by His-14, His-63, and His-196.

Belongs to the LigB/MhpB extradiol dioxygenase family. Heterotetramer of 2 alpha and 2 beta subunits. Fe(2+) serves as cofactor.

It carries out the reaction 2-aminophenol + O2 = 2-aminomuconate 6-semialdehyde. Strongly inhibited by CuSO(4), FeCl(3), K(3)[Fe(CN)(6)], AgNO3, HgCl(2) and MnCl(2). In terms of biological role, component of the 2-aminophenol 1,6-dioxygenase complex that catalyzes the ring fission of 2-aminophenol to produce 2-aminomuconic 6-semialdehyde. AmnB seems to be the catalytic subunit of the complex. The enzyme is also active toward 2-amino-p-cresol, 6-amino-m-cresol, 2-amino-m-cresol, 2-amino-4,5-dimethylphenol, 2-amino-4-chlorophenol, and catechol. This chain is 2-aminophenol 1,6-dioxygenase beta subunit (amnB), found in Pseudomonas sp.